The chain runs to 154 residues: Stigma-specific STIG1-like protein 3 (154 aa).

The signal sequence occupies residues 1-23; it reads MGHRNTVLTILLTISIAIMVLIA.

The protein belongs to the STIG1 family.

This is Stigma-specific STIG1-like protein 3 from Arabidopsis thaliana (Mouse-ear cress).